A 137-amino-acid chain; its full sequence is Cucumber peeling cupredoxin (137 aa).

Gln1 is subject to Pyrrolidone carboxylic acid. Residues 3-107 (TVHIVGDNTG…GQKLSINVVA (105 aa)) enclose the Phytocyanin domain. Cu cation contacts are provided by His46, Cys89, His94, and Gln99. Residues Cys60 and Cys95 are joined by a disulfide bond. Asn109 carries N-linked (GlcNAc...) asparagine glycosylation. The segment at 112–137 (VSMPPPSSSPPSSVMPPPVMPPPSPS) is disordered. Residues 114–137 (MPPPSSSPPSSVMPPPVMPPPSPS) show a composition bias toward pro residues. Residue Pro115 is modified to 4-hydroxyproline; partial. 4 positions are modified to 4-hydroxyproline: Pro116, Pro117, Pro121, and Pro122. Pro127 is modified (4-hydroxyproline; partial). 4-hydroxyproline occurs at positions 128, 129, 133, 134, and 136.

This chain is Cucumber peeling cupredoxin, found in Cucumis sativus (Cucumber).